The sequence spans 139 residues: Transmembrane protein 250 (139 aa).

Helical transmembrane passes span 56-76 and 116-136; these read FLLYFSCSLFTAALWGALAAL and VYGIHVTMLLVGGLGWCFMVF.

In terms of assembly, (Microbial infection) Interacts with herpes simplex virus 1/HHV-1 protein CVC2/UL25.

The protein localises to the membrane. Its subcellular location is the nucleus. The protein resides in the cytoplasm. May play a role in cell proliferation by promoting progression into S phase. In terms of biological role, (Microbial infection) Promotes human herpes simplex virus 1/HHV-1 proliferation. The sequence is that of Transmembrane protein 250 from Homo sapiens (Human).